The sequence spans 1870 residues: MARWIPTKRQKYGVAIYNYNASQDVELSLQIGDTVHILEMYEGWYRGYTLQNKSKKGIFPETYIHLKEATVEDLGQHETVIPGELPLVQELTSTLREWAVIWRKLYVNNKLTLFRQLQQMTYSLIEWRSQILSGTLPKDELAELKKKVTAKIDHGNRMLGLDLVVRDDNGNILDPDETSTIALFKAHEVASKRIEEKIQEEKSILQNLDLRGQSIFSTIHTYGLYVNFKNFVCNIGEDAELFMALYDPDQSTFISENYLIRWGSNGMPKEIEKLNNLQAVFTDLSSMDLIRPRVSLVCQIVRVGHMELKEGKKHTCGLRRPFGVAVMDITDIIHGKVDDEEKQHFIPFQQIAMETYIRQRQLIMSPLITSHVIGENEPLTSVLNKVIAAKEVNHKGQGLWVSLKLLPGDLTQVQKNFSHLVDRSTAIARKMGFPEIILPGDVRNDIYVTLIHGEFDKGKKKTPKNVEVTMSVHDEEGKLLEKAIHPGAGYEGISEYKSVVYYQVKQPCWYETVKVSIAIEEVTRCHIRFTFRHRSSQETRDKSERAFGVAFVKLMNPDGTTLQDGRHDLVVYKGDNKKMEDAKFYLTLPGTKMEMEEKELQASKNLVTFTPSKDSTKDSFQIATLICSTKLTQNVDLLGLLNWRSNSQNIKHNLKKLMEVDGGEIVKFLQDTLDALFNIMMEMSDSETYDFLVFDALVFIISLIGDIKFQHFNPVLETYIYKHFSATLAYVKLSKVLNFYVANADDSSKTELLFAALKALKYLFRFIIQSRVLYLRFYGQSKDGDEFNNSIRQLFLAFNMLMDRPLEEAVKIKGAALKYLPSIINDVKLVFDPVELSVLFCKFIQSIPDNQLVRQKLNCMTKIVESTLFRQSECREVLLPLLTDQLSGQLDDNSNKPDHEASSQLLSNILEVLDRKDVGATAVHIQLIMERLLRRINRTVIGMNRQSPHIGSFVACMIALLQQMDDSHYSHYISTFKTRQDIIDFLMETFIMFKDLIGKNVYAKDWMVMNMTQNRVFLRAINQFAEVLTRFFMDQASFELQLWNNYFHLAVAFLTHESLQLETFSQAKRNKIVKKYGDMRKEIGFRIRDMWYNLGPHKIKFIPSMVGPILEVTLTPEVELRKATIPIFFDMMQCEFNFSGNGNFHMFENELITKLDQEVEGGRGDEQYKVLLEKLLLEHCRKHKYLSSSGEVFALLVSSLLENLLDYRTIIMQDESKENRMSCTVNVLNFYKEKKREDIYIRYLYKLRDLHRDCENYTEAAYTLLLHAELLQWSDKPCVPHLLQKDSYYVYTQQELKEKLYQEIISYFDKGKMWEKAIKLSKELAETYESKVFDYEGLGNLLKKRASFYENIIKAMRPQPEYFAVGYYGQGFPSFLRNKIFIYRGKEYERREDFSLRLLTQFPNAEKMTSTTPPGEDIKSSPKQYMQCFTVKPVMSLPPSYKDKPVPEQILNYYRANEVQQFRYSRPFRKGEKDPDNEFATMWIERTTYTTAYTFPGILKWFEVKQISTEEISPLENAIETMELTNERISNCVQQHAWDRSLSVHPLSMLLSGIVDPAVMGGFSNYEKAFFTEKYLQEHPEDQEKVELLKRLIALQMPLLTEGIRIHGEKLTEQLKPLHERLSSCFRELKEKVEKHYGVITLPPNLTERKQSRTGSIVLPYIMSSTLRRLSITSVTSSVVSTSSNSSDNAPSRPGSDGSILEPLLERRASSGARVEDLSLREENSENRISKFKRKDWSLSKSQVIAEKAPEPDLMSPTRKAQRPKSLQLMDNRLSPFHGSSPPQSTPLSPPPLTPKATRTLSSPSLQTDGIAATPVPPPPPPKSKPYEGSQRNSTELAPPLPVRREAKAPPPPPPKARKSGIPTSEPGSQ.

Residues 8–69 form the SH3 domain; that stretch reads KRQKYGVAIY…PETYIHLKEA (62 aa). A Phosphoserine modification is found at S365. A C2 DOCK-type domain is found at 443–627; it reads RNDIYVTLIH…DSFQIATLIC (185 aa). The residue at position 818 (K818) is an N6-acetyllysine. In terms of domain architecture, DOCKER spans 1231–1642; the sequence is YKEKKREDIY…VEKHYGVITL (412 aa). A disordered region spans residues 1679-1702; it reads VVSTSSNSSDNAPSRPGSDGSILE. A phosphoserine mark is found at S1756, S1766, S1785, and S1789. A disordered region spans residues 1772 to 1870; the sequence is NRLSPFHGSS…GIPTSEPGSQ (99 aa). Residues 1784-1794 are compositionally biased toward pro residues; the sequence is QSTPLSPPPLT. Phosphothreonine is present on T1794. The span at 1797–1808 shows a compositional bias: polar residues; the sequence is ATRTLSSPSLQT. T1814 carries the phosphothreonine modification. Residues 1815–1824 show a composition bias toward pro residues; it reads PVPPPPPPKS. Phosphoserine occurs at positions 1834 and 1869.

It belongs to the DOCK family. As to quaternary structure, interacts with CRK and CRKL. Interacts (via N-terminus) with tensin TNS3 (via N-terminus); the interaction increases DOCK5 guanine nucleotide exchange activity towards Rac. Interacts with ELMO1.

Its subcellular location is the cytoplasm. It localises to the cell membrane. The protein resides in the cell projection. The protein localises to the podosome. Functionally, guanine nucleotide exchange factor (GEF) for Rho and Rac. GEF proteins activate small GTPases by exchanging bound GDP for free GTP. Along with DOCK1, mediates CRK/CRKL regulation of epithelial and endothelial cell spreading and migration on type IV collagen. The polypeptide is Dedicator of cytokinesis protein 5 (DOCK5) (Homo sapiens (Human)).